A 196-amino-acid chain; its full sequence is Regulator of G-protein signaling 1 (196 aa).

The disordered stretch occupies residues M1–K27. A compositionally biased stretch (basic and acidic residues) spans K11–T25. In terms of domain architecture, RGS spans S72–L187.

As to quaternary structure, interacts with GNAI1 and GNAQ.

The protein resides in the cell membrane. Its subcellular location is the cytoplasm. It localises to the cytosol. Its function is as follows. Regulates G protein-coupled receptor signaling cascades, including signaling downstream of the N-formylpeptide chemoattractant receptors and leukotriene receptors. Inhibits B cell chemotaxis toward CXCL12. Inhibits signal transduction by increasing the GTPase activity of G protein alpha subunits, thereby driving them into their inactive GDP-bound form. This Equus caballus (Horse) protein is Regulator of G-protein signaling 1 (RGS1).